Reading from the N-terminus, the 779-residue chain is Acyl-CoA dehydrogenase family member 11 (779 aa).

Lys-175 is modified (N6-acetyllysine). Ser-210 is modified (phosphoserine). The residue at position 323 (Tyr-323) is a Phosphotyrosine. N6-succinyllysine is present on residues Lys-368 and Lys-390. Residues 503–513 (FCMTEPNVSSS), 511–513 (SSS), 537–539 (WSS), and Ser-539 contribute to the FAD site. Residue Ser-513 participates in substrate binding. A substrate-binding site is contributed by 628–631 (GPGR). FAD is bound by residues Arg-656, Gln-726, and 726-730 (QVHGG). Gly-754 serves as a coordination point for substrate. FAD-binding positions include 755-757 (PDE) and Glu-757. N6-acetyllysine is present on Lys-765.

It belongs to the acyl-CoA dehydrogenase family. Homodimer. It depends on FAD as a cofactor.

The protein localises to the peroxisome. It localises to the mitochondrion membrane. It carries out the reaction a 2,3-saturated acyl-CoA + oxidized [electron-transfer flavoprotein] + H(+) = a (2E)-enoyl-CoA + reduced [electron-transfer flavoprotein]. It catalyses the reaction docosanoyl-CoA + oxidized [electron-transfer flavoprotein] + H(+) = (2E)-docosenoyl-CoA + reduced [electron-transfer flavoprotein]. The catalysed reaction is tetracosanoyl-CoA + oxidized [electron-transfer flavoprotein] + H(+) = (2E)-tetracosenoyl-CoA + reduced [electron-transfer flavoprotein]. The enzyme catalyses eicosanoyl-CoA + oxidized [electron-transfer flavoprotein] + H(+) = (2E)-eicosenoyl-CoA + reduced [electron-transfer flavoprotein]. It carries out the reaction hexacosanoyl-CoA + oxidized [electron-transfer flavoprotein] + H(+) = (2E)-hexacosenoyl-CoA + reduced [electron-transfer flavoprotein]. It catalyses the reaction tricosanoyl-CoA + oxidized [electron-transfer flavoprotein] + H(+) = (2E)-tricosenoyl-CoA + reduced [electron-transfer flavoprotein]. It functions in the pathway lipid metabolism; fatty acid beta-oxidation. Acyl-CoA dehydrogenase, that exhibits maximal activity towards saturated C22-CoA. Probably participates in beta-oxydation and energy production but could also play a role in the metabolism of specific fatty acids to control fatty acids composition of cellular lipids in brain. The sequence is that of Acyl-CoA dehydrogenase family member 11 (Acad11) from Rattus norvegicus (Rat).